The primary structure comprises 153 residues: Troponin C (153 aa).

4 EF-hand domains span residues 9–44 (EQVQ…LGQT), 45–80 (FEEN…FLVE), 85–120 (AMQE…LDDK), and 121–153 (LTED…MTGD). Ca(2+) is bound by residues Asp58, Asp60, Ser62, Glu64, and Glu69. The Ca(2+) site is built by Asp134, Asp136, Ser138, Thr140, and Glu145.

This sequence belongs to the troponin C family.

Troponin is the central regulatory protein of striated muscle contraction. Tn consists of three components: Tn-I which is the inhibitor of actomyosin ATPase, Tn-T which contains the binding site for tropomyosin and Tn-C. The binding of calcium to Tn-C abolishes the inhibitory action of Tn on actin filaments. The sequence is that of Troponin C from Tyrophagus putrescentiae (Mold mite).